The chain runs to 443 residues: Acid phosphatase type 7 (443 aa).

The N-terminal stretch at 1–23 (MAAAPPPPPPLLLLLLCVCAVFA) is a signal peptide. N-linked (GlcNAc...) asparagine glycans are attached at residues N53, N76, and N126. Residues D140, D169, and Y172 each coordinate Fe cation. A Zn(2+)-binding site is contributed by D169. Residue N204 participates in Zn(2+) binding. The N-linked (GlcNAc...) asparagine glycan is linked to N210. A Zn(2+)-binding site is contributed by H288. N313 is a glycosylation site (N-linked (GlcNAc...) asparagine). H338 provides a ligand contact to Zn(2+). H340 is a binding site for Fe cation. N-linked (GlcNAc...) asparagine glycosylation is found at N355 and N409.

This sequence belongs to the metallophosphoesterase superfamily. Purple acid phosphatase family. Fe cation is required as a cofactor. It depends on Zn(2+) as a cofactor.

The protein resides in the secreted. The enzyme catalyses a phosphate monoester + H2O = an alcohol + phosphate. The chain is Acid phosphatase type 7 from Danio rerio (Zebrafish).